A 266-amino-acid polypeptide reads, in one-letter code: Prolactin-7A1 (266 aa).

Residues 1 to 30 (MPLSFTQPCSSGALLLLVVSNLLLWENVAC) form the signal peptide. Residues N36, N58, N110, N149, and N157 are each glycosylated (N-linked (GlcNAc...) asparagine). 2 disulfide bridges follow: C114/C231 and C248/C257.

It belongs to the somatotropin/prolactin family. Expressed specifically in the placenta. Detected only in the trophoblast giant cells.

It localises to the secreted. The chain is Prolactin-7A1 (Prl7a1) from Mus musculus (Mouse).